The primary structure comprises 769 residues: 3-O-beta-D-glucopyranosyl-beta-D-glucuronide phosphorylase (769 aa).

D457 acts as the Proton donor in catalysis.

It belongs to the glycosyl hydrolase 94 family. As to quaternary structure, homodimer.

Its subcellular location is the cytoplasm. The enzyme catalyses 3-O-beta-D-glucosyl-D-glucuronate + phosphate = aldehydo-D-glucuronate + alpha-D-glucose 1-phosphate. It catalyses the reaction a 3-O-beta-D-glucosyl-beta-D-glucuronoside + phosphate = a beta-D-glucuronoside + alpha-D-glucose 1-phosphate. Glycoside phosphorylase that catalyzes the reversible phosphorolysis of 3-O-beta-D-glucosyl-D-glucuronate into D-glucuronic acid and alpha-D-glucose 1-phosphate. Cannot phosphorolyze cellobionic acid and laminaribiose. In the reverse direction, using alpha-D-glucose 1-phosphate as a donor substrate, the enzyme acts on D-glucuronate and its artificial derivative p-nitrophenyl-beta-D-glucuronide. The apparent catalytic efficiency towards p-nitrophenyl-beta-D-glucuronide is approximately 5-fold higher than that towards D-glucuronic acid. Is probably involved in the metabolism of oligosaccharides containing the 3-O-beta-D-glucopyranosyl-beta-D-glucuronide structure released from bacterial and plant acidic carbohydrates. The chain is 3-O-beta-D-glucopyranosyl-beta-D-glucuronide phosphorylase from Paenibacillus borealis.